We begin with the raw amino-acid sequence, 332 residues long: MKQVQTKRDWKKLAYDVVEEKMIAKEDAIAILEAEDTEVLEIMNAAYIIRHHYFGKKVKLNMIINTKSGLCPEDCGYCSQSIISEAPIDKYAWLTQEKIVEGAHEAIRRKAGTYCIVASGRRPTDKEVNHVIGAVKEIRETTDLKICCCLGFLNEDQAGRLAEAGVHRYNHNLNTHANNYENICSTHTYDDRVDTVQKAKQAGISPCSGAIFGMGETIEERAEIAFELQRIDADSIPCNFLVAVKGTPLEGQKELTPVECLKVLAMMRFVNPTKEIRISGGREINLRSVQPIGLFAANSIFVGDYLTTAGQEPTADWGMIEDLGFEIEECAL.

The Radical SAM core domain occupies 53–282 (YFGKKVKLNM…TKEIRISGGR (230 aa)). Residues cysteine 71, cysteine 75, and cysteine 78 each coordinate [4Fe-4S] cluster. Cysteine 115, cysteine 147, cysteine 207, and arginine 277 together coordinate [2Fe-2S] cluster.

This sequence belongs to the radical SAM superfamily. Biotin synthase family. As to quaternary structure, homodimer. [4Fe-4S] cluster is required as a cofactor. The cofactor is [2Fe-2S] cluster.

It carries out the reaction (4R,5S)-dethiobiotin + (sulfur carrier)-SH + 2 reduced [2Fe-2S]-[ferredoxin] + 2 S-adenosyl-L-methionine = (sulfur carrier)-H + biotin + 2 5'-deoxyadenosine + 2 L-methionine + 2 oxidized [2Fe-2S]-[ferredoxin]. It functions in the pathway cofactor biosynthesis; biotin biosynthesis; biotin from 7,8-diaminononanoate: step 2/2. In terms of biological role, catalyzes the conversion of dethiobiotin (DTB) to biotin by the insertion of a sulfur atom into dethiobiotin via a radical-based mechanism. This Bacillus thuringiensis (strain Al Hakam) protein is Biotin synthase.